Consider the following 409-residue polypeptide: Nucleoprotein (409 aa).

2 disordered regions span residues 1-64 (MSAG…SNVK) and 167-197 (RNSS…VDDD). Residues 30-161 (GTGQASWFQS…NNYRWDFIAL (132 aa)) form an RNA-binding region. One can recognise a CoV N NTD domain in the interval 32–157 (GQASWFQSLK…GGPDNNYRWD (126 aa)). A compositionally biased stretch (basic and acidic residues) spans 176-197 (ENSRPGSRDSSRGRQRSRVDDD). Ser192 is modified (phosphoserine; by host). The CoV N CTD domain maps to 217-333 (SKQKANEMAE…ECVDGVGTRP (117 aa)). The interval 228-335 (KYHKRAIAPG…VDGVGTRPKD (108 aa)) is dimerization. Cys322 and Cys325 are oxidised to a cystine. Positions 327 to 409 (DGVGTRPKDD…GEGAFDDINI (83 aa)) are disordered. The span at 332–349 (RPKDDPTPRSRAASKDRN) shows a compositional bias: basic and acidic residues. Residue Thr374 is modified to Phosphothreonine; by host.

This sequence belongs to the gammacoronavirus nucleocapsid protein family. In terms of assembly, homooligomer. Both monomeric and oligomeric forms interact with RNA. Interacts with protein M. Interacts with NSP3; this interaction serves to tether the genome to the newly translated replicase-transcriptase complex at a very early stage of infection. In terms of processing, ADP-ribosylated. The ADP-ribosylation is retained in the virion during infection. Phosphorylated on serine and threonine residues.

The protein localises to the virion. Its subcellular location is the host endoplasmic reticulum-Golgi intermediate compartment. It localises to the host Golgi apparatus. In terms of biological role, packages the positive strand viral genome RNA into a helical ribonucleocapsid (RNP) and plays a fundamental role during virion assembly through its interactions with the viral genome and membrane protein M. Plays an important role in enhancing the efficiency of subgenomic viral RNA transcription as well as viral replication. The polypeptide is Nucleoprotein (Gallus gallus (Chicken)).